The primary structure comprises 1368 residues: DNA-directed RNA polymerase subunit beta (1368 aa).

This sequence belongs to the RNA polymerase beta chain family. As to quaternary structure, the RNAP catalytic core consists of 2 alpha, 1 beta, 1 beta' and 1 omega subunit. When a sigma factor is associated with the core the holoenzyme is formed, which can initiate transcription.

The enzyme catalyses RNA(n) + a ribonucleoside 5'-triphosphate = RNA(n+1) + diphosphate. Functionally, DNA-dependent RNA polymerase catalyzes the transcription of DNA into RNA using the four ribonucleoside triphosphates as substrates. The sequence is that of DNA-directed RNA polymerase subunit beta from Cupriavidus necator (strain ATCC 17699 / DSM 428 / KCTC 22496 / NCIMB 10442 / H16 / Stanier 337) (Ralstonia eutropha).